The chain runs to 227 residues: Zinc finger protein ZAT10 (227 aa).

The C2H2-type 1 zinc-finger motif lies at 80-102 (YKCSVCDKTFSSYQALGGHKASH). The tract at residues 96–128 (GGHKASHRKNLSQTLSGGGDDHSTSSATTTSAV) is disordered. Residues 119 to 128 (TSSATTTSAV) show a composition bias toward low complexity. The segment at 136–158 (HVCTICNKSFPSGQALGGHKRCH) adopts a C2H2-type 2 zinc-finger fold. The interval 168 to 189 (SSVSNSEGAGSTSHVSSSHRGF) is disordered. Positions 174–186 (EGAGSTSHVSSSH) are enriched in polar residues.

As to expression, expressed in roots, stems and leaves.

It localises to the nucleus. In terms of biological role, transcriptional repressor involved in abiotic stress responses. Can repress the stress responsive genes DREB1A and LTI78. Probably involved in jasmonate (JA) early signaling response. May regulate the expression of the JA biosynthesis gene LOX3 and control the expression of TIFY10A/JAZ1, a key repressor in the JA signaling cascade. This is Zinc finger protein ZAT10 (ZAT10) from Arabidopsis thaliana (Mouse-ear cress).